The primary structure comprises 626 residues: Basic helix-loop-helix ARNT-like protein 1 (626 aa).

The segment at 1–58 is disordered; that stretch reads MADQRMDISSTISDFMSPGPTDLLSGSLSTSGVDCNRKRKGSATDYQESMDTDKDDPH. At S17 the chain carries Phosphoserine; by GSK3-beta. A compositionally biased stretch (low complexity) spans 17–32; it reads SPGPTDLLSGSLSTSG. Position 21 is a phosphothreonine; by GSK3-beta (T21). Residues 36–41 carry the Nuclear localization signal motif; sequence NRKRKG. Residues 72-125 enclose the bHLH domain; sequence NAREAHSQIEKRRRDKMNSFIDELASLVPTCNAMSRKLDKLTVLRMAVQHMKTL. S78 carries the post-translational modification Phosphoserine. S90 carries the phosphoserine; by CK2 modification. Positions 142-152 match the Nuclear export signal 1 motif; that stretch reads LSDDELKHLIL. Residues 143–215 enclose the PAS 1 domain; that stretch reads SDDELKHLIL…EQLSSSDTAP (73 aa). K252 participates in a covalent cross-link: Glycyl lysine isopeptide (Lys-Gly) (interchain with G-Cter in SUMO2 and SUMO3). K259 participates in a covalent cross-link: Glycyl lysine isopeptide (Lys-Gly) (interchain with G-Cter in SUMO); alternate. K259 participates in a covalent cross-link: Glycyl lysine isopeptide (Lys-Gly) (interchain with G-Cter in SUMO2); alternate. One can recognise a PAS 2 domain in the interval 326–396; it reads PQPVNGEIRV…ECHRQVLQTR (71 aa). The short motif at 361–369 is the Nuclear export signal 2 element; that stretch reads LAYLPQELL. The 44-residue stretch at 401–444 folds into the PAC domain; the sequence is TNCYKFKIKDGSFITLRSRWFSFMNPWTKEVEYIVSTNTVVLAN. 2 disordered regions span residues 459-492 and 511-595; these read SPHS…RAGA and GSSP…SPSN. The tract at residues 508-588 is interaction with CIART; sequence RIRGSSPSSC…IGIDMIDNDQ (81 aa). Over residues 511 to 521 the composition is skewed to low complexity; the sequence is GSSPSSCGSSP. The residue at position 538 (K538) is an N6-acetyllysine.

Component of the circadian clock oscillator which includes the CRY1/2 proteins, CLOCK or NPAS2, BMAL1 or BMAL2, CSNK1D and/or CSNK1E, TIMELESS and the PER1/2/3 proteins. Forms a heterodimer with CLOCK. The CLOCK-BMAL1 heterodimer is required for E-box-dependent transactivation, for CLOCK nuclear translocation and degradation, and, for phosphorylation of both CLOCK and BMAL1. Part of a nuclear complex which also includes RACK1 and PRKCA; RACK1 and PRKCA are recruited to the complex in a circadian manner. Interacts with NPAS2. Interacts with EZH2. Interacts with SUMO3. Interacts with SIRT1. Interacts with AHR. Interacts with ID1, ID2 and ID3. Interacts with DDX4. Interacts with OGT. Interacts with EED and SUZ12. Interacts with MTA1. Interacts with CIART. Interacts with HSP90. Interacts with KAT2B and EP300. Interacts with BHLHE40/DEC1 and BHLHE41/DEC2. Interacts with RELB and the interaction is enhanced in the presence of CLOCK. Interacts with PER1, PER2, CRY1 and CRY2 and this interaction requires a translocation to the nucleus. Interaction of the CLOCK-BMAL1 heterodimer with PER or CRY inhibits transcription activation. Interaction of the CLOCK-BMAL1 with CRY1 is independent of DNA but with PER2 is off DNA. The CLOCK-BMAL1 heterodimer interacts with GSK3B. Interacts with KDM5A. Interacts with KMT2A; in a circadian manner. Interacts with UBE3A. Interacts with PRKCG. Interacts with MAGEL2. Interacts with NCOA2. Interacts with THRAP3. The CLOCK-BMAL1 heterodimer interacts with PASD1. Interacts with PASD1. Interacts with USP9X. Interacts with PIWIL2 (via PIWI domain). Interacts with HDAC3. Interacts with HNF4A. In terms of processing, ubiquitinated, leading to its proteasomal degradation. Deubiquitinated by USP9X. Post-translationally, O-glycosylated; contains O-GlcNAc. O-glycosylation by OGT prevents protein degradation by inhibiting ubiquitination. It also stabilizes the CLOCK-BMAL1 heterodimer thereby increasing CLOCK-BMAL1-mediated transcription of genes in the negative loop of the circadian clock such as PER1/2/3 and CRY1/2. Acetylated on Lys-538 by CLOCK during the repression phase of the circadian cycle. Acetylation facilitates recruitment of CRY1 protein and initiates the repression phase of the circadian cycle. Acetylated at Lys-538 by KAT5 during the activation phase of the cycle, leading to recruitment of the positive transcription elongation factor b (P-TEFb) and BRD4, followed by productive elongation of circadian transcripts. Deacetylated by SIRT1, which may result in decreased protein stability. In terms of processing, phosphorylated upon dimerization with CLOCK. Phosphorylation enhances the transcriptional activity, alters the subcellular localization and decreases the stability of the CLOCK-BMAL1 heterodimer by promoting its degradation. Phosphorylation shows circadian variations in the liver with a peak between CT10 to CT14. Phosphorylation at Ser-90 by CK2 is essential for its nuclear localization, its interaction with CLOCK and controls CLOCK nuclear entry. Dephosphorylation at Ser-78 is important for dimerization with CLOCK and transcriptional activity. Post-translationally, sumoylated on Lys-259 upon dimerization with CLOCK. Predominantly conjugated to poly-SUMO2/3 rather than SUMO1 and the level of these conjugates undergo rhythmic variation, peaking at CT9-CT12. Sumoylation localizes it exclusively to the PML body and promotes its ubiquitination in the PML body, ubiquitin-dependent proteasomal degradation and the transcriptional activity of the CLOCK-BMAL1 heterodimer. Undergoes lysosome-mediated degradation in a time-dependent manner in the liver.

Its subcellular location is the nucleus. It is found in the cytoplasm. It localises to the PML body. Its function is as follows. Transcriptional activator which forms a core component of the circadian clock. The circadian clock, an internal time-keeping system, regulates various physiological processes through the generation of approximately 24 hour circadian rhythms in gene expression, which are translated into rhythms in metabolism and behavior. It is derived from the Latin roots 'circa' (about) and 'diem' (day) and acts as an important regulator of a wide array of physiological functions including metabolism, sleep, body temperature, blood pressure, endocrine, immune, cardiovascular, and renal function. Consists of two major components: the central clock, residing in the suprachiasmatic nucleus (SCN) of the brain, and the peripheral clocks that are present in nearly every tissue and organ system. Both the central and peripheral clocks can be reset by environmental cues, also known as Zeitgebers (German for 'timegivers'). The predominant Zeitgeber for the central clock is light, which is sensed by retina and signals directly to the SCN. The central clock entrains the peripheral clocks through neuronal and hormonal signals, body temperature and feeding-related cues, aligning all clocks with the external light/dark cycle. Circadian rhythms allow an organism to achieve temporal homeostasis with its environment at the molecular level by regulating gene expression to create a peak of protein expression once every 24 hours to control when a particular physiological process is most active with respect to the solar day. Transcription and translation of core clock components (CLOCK, NPAS2, BMAL1, BMAL2, PER1, PER2, PER3, CRY1 and CRY2) plays a critical role in rhythm generation, whereas delays imposed by post-translational modifications (PTMs) are important for determining the period (tau) of the rhythms (tau refers to the period of a rhythm and is the length, in time, of one complete cycle). A diurnal rhythm is synchronized with the day/night cycle, while the ultradian and infradian rhythms have a period shorter and longer than 24 hours, respectively. Disruptions in the circadian rhythms contribute to the pathology of cardiovascular diseases, cancer, metabolic syndromes and aging. A transcription/translation feedback loop (TTFL) forms the core of the molecular circadian clock mechanism. Transcription factors, CLOCK or NPAS2 and BMAL1 or BMAL2, form the positive limb of the feedback loop, act in the form of a heterodimer and activate the transcription of core clock genes and clock-controlled genes (involved in key metabolic processes), harboring E-box elements (5'-CACGTG-3') within their promoters. The core clock genes: PER1/2/3 and CRY1/2 which are transcriptional repressors form the negative limb of the feedback loop and interact with the CLOCK|NPAS2-BMAL1|BMAL2 heterodimer inhibiting its activity and thereby negatively regulating their own expression. This heterodimer also activates nuclear receptors NR1D1/2 and RORA/B/G, which form a second feedback loop and which activate and repress BMAL1 transcription, respectively. BMAL1 positively regulates myogenesis and negatively regulates adipogenesis via the transcriptional control of the genes of the canonical Wnt signaling pathway. Plays a role in normal pancreatic beta-cell function; regulates glucose-stimulated insulin secretion via the regulation of antioxidant genes NFE2L2/NRF2 and its targets SESN2, PRDX3, CCLC and CCLM. Negatively regulates the mTORC1 signaling pathway; regulates the expression of MTOR and DEPTOR. Controls diurnal oscillations of Ly6C inflammatory monocytes; rhythmic recruitment of the PRC2 complex imparts diurnal variation to chemokine expression that is necessary to sustain Ly6C monocyte rhythms. Regulates the expression of HSD3B2, STAR, PTGS2, CYP11A1, CYP19A1 and LHCGR in the ovary and also the genes involved in hair growth. Plays an important role in adult hippocampal neurogenesis by regulating the timely entry of neural stem/progenitor cells (NSPCs) into the cell cycle and the number of cell divisions that take place prior to cell-cycle exit. Regulates the circadian expression of CIART and KLF11. The CLOCK-BMAL1 heterodimer regulates the circadian expression of SERPINE1/PAI1, VWF, B3, CCRN4L/NOC, NAMPT, DBP, MYOD1, PPARGC1A, PPARGC1B, SIRT1, GYS2, F7, NGFR, GNRHR, BHLHE40/DEC1, ATF4, MTA1, KLF10 and also genes implicated in glucose and lipid metabolism. Promotes rhythmic chromatin opening, regulating the DNA accessibility of other transcription factors. May play a role in spermatogenesis; contributes to the chromatoid body assembly and physiology. The NPAS2-BMAL1 heterodimer positively regulates the expression of MAOA, F7 and LDHA and modulates the circadian rhythm of daytime contrast sensitivity by regulating the rhythmic expression of adenylate cyclase type 1 (ADCY1) in the retina. The preferred binding motif for the CLOCK-BMAL1 heterodimer is 5'-CACGTGA-3', which contains a flanking adenine nucleotide at the 3-prime end of the canonical 6-nucleotide E-box sequence. CLOCK specifically binds to the half-site 5'-CAC-3', while BMAL1 binds to the half-site 5'-GTGA-3'. The CLOCK-BMAL1 heterodimer also recognizes the non-canonical E-box motifs 5'-AACGTGA-3' and 5'-CATGTGA-3'. Essential for the rhythmic interaction of CLOCK with ASS1 and plays a critical role in positively regulating CLOCK-mediated acetylation of ASS1. Plays a role in protecting against lethal sepsis by limiting the expression of immune checkpoint protein CD274 in macrophages in a PKM2-dependent manner. Regulates the diurnal rhythms of skeletal muscle metabolism via transcriptional activation of genes promoting triglyceride synthesis (DGAT2) and metabolic efficiency (COQ10B). The polypeptide is Basic helix-loop-helix ARNT-like protein 1 (Rattus norvegicus (Rat)).